The following is a 789-amino-acid chain: MEKINVLVVGNGGREHALVWKLAQSPWAKHIFVAPGNGGFSKLENVTSVPIGSSPSDFGSLVDFATKHNVGLVIPGPEQPLVDGITTWFQKAGIPVFGPSAKAARMEGSKTFSKDFMKKHNIPTARYENFTDYEAAKQYIANSSHNLVIKASGIAAGKGVLIPANKQEAYEAIKEIMVNKQFGSAGDEVVIEEFLEGDELSILCISDGYSFVDLPPAQDHKRIGDGDTGLNTGGMGAYSPAPIGTPSLLEKIRKNILKPTIDGMRKDGYPMVGCLFVGVMVTPDGDPKVLEYNVRFGDPETQTVLPLLKSDLLELMLATVEHRLDSVDFQVHADKYSTTVVVAAGGYPESYRKGDEITVKEPLPENTFIFHAGTKEENGKVVTAGGRVIAATAIADTLEEAVKKAYVGVDHISFKDKYNRTDIAHRAFKEKPKNKVSLTYEDAGVSVDAGNQLVEKIKKSVKSTKRPGADSEIGGFGGLFDLQRAGYTDINNTLLVAATDGVGTKLRVAQIMDIHNTVGIDLVAMNVNDLVVQGAEPLMFLDYFATAHLDIKVAADFVEGVADGCKLSGCALVGGETSEMPGMYAPGHYDTNGTAVGAVLKENILPKKDKMNAGDVLLGIASDGVHSNGFSLIRKIIETTDYSYTDPAPWNPKSTIGEEVLIPTRIYVKQLLPATRRGLILGLAHITGGGLVENIPRAIPDNLSAEVDMTTWNVPEIFKWLGKTGGVPINDILKTLNMGIGMVAIVKPENVEEVIKVLKEAGETVYTIGKLVERKDLPGCTIKNSEDLY.

The interval 1-428 is GARS; that stretch reads MEKINVLVVG…NRTDIAHRAF (428 aa). Residues 114 to 321 form the ATP-grasp domain; sequence KDFMKKHNIP…LLELMLATVE (208 aa). Residue 140-201 coordinates ATP; that stretch reads IANSSHNLVI…EEFLEGDELS (62 aa). The Mg(2+) site is built by glutamate 291 and asparagine 293. The interval 438–773 is AIRS; that stretch reads LTYEDAGVSV…TVYTIGKLVE (336 aa).

The protein in the N-terminal section; belongs to the GARS family. This sequence in the C-terminal section; belongs to the AIR synthase family. It depends on Mg(2+) as a cofactor. The cofactor is Mn(2+).

Its subcellular location is the cytoplasm. It localises to the cytosol. The catalysed reaction is 2-formamido-N(1)-(5-O-phospho-beta-D-ribosyl)acetamidine + ATP = 5-amino-1-(5-phospho-beta-D-ribosyl)imidazole + ADP + phosphate + H(+). It carries out the reaction 5-phospho-beta-D-ribosylamine + glycine + ATP = N(1)-(5-phospho-beta-D-ribosyl)glycinamide + ADP + phosphate + H(+). The protein operates within purine metabolism; IMP biosynthesis via de novo pathway; 5-amino-1-(5-phospho-D-ribosyl)imidazole from N(2)-formyl-N(1)-(5-phospho-D-ribosyl)glycinamide: step 2/2. Its pathway is purine metabolism; IMP biosynthesis via de novo pathway; N(1)-(5-phospho-D-ribosyl)glycinamide from 5-phospho-alpha-D-ribose 1-diphosphate: step 2/2. Functionally, catalyzes the second and fifth step in the 'de novo' purine biosynthesis pathway; contains phosphoribosylamine--glycine ligase (GARS) and phosphoribosylformylglycinamidine cyclo-ligase (AIRS) activities. This is Bifunctional purine biosynthetic protein PUR2,5 from Pichia angusta (Yeast).